A 91-amino-acid polypeptide reads, in one-letter code: Putative pterin-4-alpha-carbinolamine dehydratase (91 aa).

The protein belongs to the pterin-4-alpha-carbinolamine dehydratase family.

The enzyme catalyses (4aS,6R)-4a-hydroxy-L-erythro-5,6,7,8-tetrahydrobiopterin = (6R)-L-erythro-6,7-dihydrobiopterin + H2O. The protein is Putative pterin-4-alpha-carbinolamine dehydratase of Halobacterium salinarum (strain ATCC 29341 / DSM 671 / R1).